Consider the following 293-residue polypeptide: Phosphatidylserine decarboxylase proenzyme (293 aa).

Active-site charge relay system; for autoendoproteolytic cleavage activity residues include D90, H147, and S254. S254 acts as the Schiff-base intermediate with substrate; via pyruvic acid; for decarboxylase activity in catalysis. S254 carries the post-translational modification Pyruvic acid (Ser); by autocatalysis.

The protein belongs to the phosphatidylserine decarboxylase family. PSD-B subfamily. Prokaryotic type I sub-subfamily. Heterodimer of a large membrane-associated beta subunit and a small pyruvoyl-containing alpha subunit. Requires pyruvate as cofactor. Post-translationally, is synthesized initially as an inactive proenzyme. Formation of the active enzyme involves a self-maturation process in which the active site pyruvoyl group is generated from an internal serine residue via an autocatalytic post-translational modification. Two non-identical subunits are generated from the proenzyme in this reaction, and the pyruvate is formed at the N-terminus of the alpha chain, which is derived from the carboxyl end of the proenzyme. The autoendoproteolytic cleavage occurs by a canonical serine protease mechanism, in which the side chain hydroxyl group of the serine supplies its oxygen atom to form the C-terminus of the beta chain, while the remainder of the serine residue undergoes an oxidative deamination to produce ammonia and the pyruvoyl prosthetic group on the alpha chain. During this reaction, the Ser that is part of the protease active site of the proenzyme becomes the pyruvoyl prosthetic group, which constitutes an essential element of the active site of the mature decarboxylase.

The protein resides in the cell membrane. It catalyses the reaction a 1,2-diacyl-sn-glycero-3-phospho-L-serine + H(+) = a 1,2-diacyl-sn-glycero-3-phosphoethanolamine + CO2. The protein operates within phospholipid metabolism; phosphatidylethanolamine biosynthesis; phosphatidylethanolamine from CDP-diacylglycerol: step 2/2. Functionally, catalyzes the formation of phosphatidylethanolamine (PtdEtn) from phosphatidylserine (PtdSer). This is Phosphatidylserine decarboxylase proenzyme from Yersinia pseudotuberculosis serotype O:1b (strain IP 31758).